Consider the following 402-residue polypeptide: Multidrug resistance protein MdtH (402 aa).

The next 11 helical transmembrane spans lie at 13-33 (YFLL…FPLI), 34-54 (SIRF…ALGL), 99-116 (PWVL…GTLF), 139-159 (LLMM…SWLL), 165-185 (LVCG…AWLL), 214-234 (VLTL…LPVM), 243-263 (AAVK…LYPL), 277-297 (LMAG…ASNL), 300-320 (LFTL…ARET), 340-360 (LGLA…FDAG), and 368-388 (LPWA…WWQF).

Belongs to the major facilitator superfamily. DHA1 family. MdtH (TC 2.A.1.2.21) subfamily.

It localises to the cell inner membrane. The chain is Multidrug resistance protein MdtH from Cronobacter sakazakii (strain ATCC BAA-894) (Enterobacter sakazakii).